The primary structure comprises 349 residues: Terpene synthase 2 (349 aa).

A DDxx(x)D/E motif motif is present at residues 84 to 89 (DDLFDG). The NDxxSxxxD/E motif signature appears at 229 to 237 (NDCVSYEKE).

Belongs to the terpene synthase family.

It catalyses the reaction (2E,6E)-farnesyl diphosphate = (3S)-(+)-asterisca-2(9),6-diene + diphosphate. The enzyme catalyses (2E)-geranyl diphosphate = (Z)-beta-ocimene + diphosphate. It carries out the reaction (2E)-geranyl diphosphate + H2O = linalool + diphosphate. Functionally, terpene synthase that converts its substrate farnesyl diphosphate (FPP) into the sesquiterpene (3S)-(+)-asterisca-2(9),6-diene. Is also able to convert geranyl diphosphate (GPP) into a mixture of monoterpenes including (Z)-beta-ocimene, allo-ocimene and linalool. The sequence is that of Terpene synthase 2 from Dictyostelium discoideum (Social amoeba).